We begin with the raw amino-acid sequence, 484 residues long: Monocarboxylate transporter 2 (484 aa).

The Cytoplasmic segment spans residues 1-16 (MPSEPSAPLPQPLPPD). A helical membrane pass occupies residues 17 to 37 (GGWGWVVVCASFISIGFSYAF). Residues 38–60 (PKAVTVFFKDIQEIFNTTSSQIA) are Extracellular-facing. The chain crosses the membrane as a helical span at residues 61-81 (WISSIMLAVMYAGGPISSVLV). Over 82–90 (NNYGSRPVV) the chain is Cytoplasmic. The chain crosses the membrane as a helical span at residues 91 to 111 (IVGGLLCCIGMILASYSNSVI). Residues 112-116 (ELYLT) are Extracellular-facing. A helical transmembrane segment spans residues 117-137 (VGFIGGLGLAFNLQPALTIIG). Residues 138-149 (KYFYRRRPLANG) are Cytoplasmic-facing. Residues 150-170 (CAMAGSPVFLSTLAPFNQYLF) traverse the membrane as a helical segment. The Extracellular segment spans residues 171-174 (NNYG). A helical membrane pass occupies residues 175–195 (WKGSFLILGGIFLHSCVAGCL). Over 196-245 (MRPVGPSPNTKKSKSKVGSRHDSTLKKASKVSTAQKVNRFLDFSLFMHRG) the chain is Cytoplasmic. A helical transmembrane segment spans residues 246–266 (FLIYLSGNVILFLGIFAPIIF). At 267-281 (LAQYAKHIGVDDYNS) the chain is on the extracellular side. The chain crosses the membrane as a helical span at residues 282–302 (AFLLSVMAFIDMFARPSVGLI). At 303–311 (ANTSLIRPR) the chain is on the cytoplasmic side. A helical transmembrane segment spans residues 312–332 (IQYLFSSAIIFTGICHLLCPL). Residues 333 to 337 (ATTYS) lie on the Extracellular side of the membrane. A helical membrane pass occupies residues 338-358 (ALVVYVVFFGLGFGSISSLLF). Over 359-372 (ECLMDIVGATRFSS) the chain is Cytoplasmic. The chain crosses the membrane as a helical span at residues 373–393 (AVGLTTIVECCPVLFGPPLAG). The Extracellular portion of the chain corresponds to 394–405 (KLLDITGEYKYL). A helical membrane pass occupies residues 406 to 426 (YIASGTVVLVSGTYLLIGNAI). Residues 427-484 (NYRLLDKERKREKAKKKKSASHASREMEALNRSKQDEVTVKASNAHNPPSDRDKESNI) are Cytoplasmic-facing. A disordered region spans residues 438–484 (EKAKKKKSASHASREMEALNRSKQDEVTVKASNAHNPPSDRDKESNI). Composition is skewed to basic and acidic residues over residues 449–465 (ASREMEALNRSKQDEVT) and 475–484 (PSDRDKESNI).

Belongs to the major facilitator superfamily. Monocarboxylate porter (TC 2.A.1.13) family. Homodimer. Interacts with GRID2IP. Interacts with EMB; interaction mediates SLC16A7 targeting to the plasma membrane. Interacts with isoform 2 of BSG. Detected in testis and in spermatozoa (at protein level).

The protein resides in the cell membrane. It localises to the cytoplasm. Its subcellular location is the basolateral cell membrane. It carries out the reaction (S)-lactate(in) + H(+)(in) = (S)-lactate(out) + H(+)(out). The catalysed reaction is 3-methyl-2-oxobutanoate(out) + H(+)(out) = 3-methyl-2-oxobutanoate(in) + H(+)(in). It catalyses the reaction acetoacetate(out) + H(+)(out) = acetoacetate(in) + H(+)(in). The enzyme catalyses (R)-3-hydroxybutanoate(out) + H(+)(out) = (R)-3-hydroxybutanoate(in) + H(+)(in). It carries out the reaction 4-methyl-2-oxopentanoate(out) + H(+)(out) = 4-methyl-2-oxopentanoate(in) + H(+)(in). The catalysed reaction is pyruvate(out) + H(+)(out) = pyruvate(in) + H(+)(in). It catalyses the reaction (S)-3-hydroxybutanoate(out) + H(+)(out) = (S)-3-hydroxybutanoate(in) + H(+)(in). Its activity is regulated as follows. Transport activity exhibits steep dependence on substrate concentration. Substrate concentration sensitivity of SLC16A7 arises from the strong inter-subunit cooperativity of the SLC16A7 dimer during transport. Inhibited by AR-C155858. Its function is as follows. Proton-coupled monocarboxylate symporter. Catalyzes the rapid transport across the plasma membrane of monocarboxylates such as L-lactate, pyruvate and ketone bodies, acetoacetate, beta-hydroxybutyrate and acetate. Dimerization is functionally required and both subunits work cooperatively in transporting substrate. The sequence is that of Monocarboxylate transporter 2 (Slc16a7) from Mus musculus (Mouse).